The following is a 348-amino-acid chain: MSLVSVHNEWDPLEEIIVGTAVGARVPRADRSVFAVEYADEYDSQDQVPAGPYPDRVLKETEEELHVLSEELTKLGVTVRRPGQRDNSALVATPDWQTDGFHDYCPRDGLLAVGQTVIESPMALRARFLESLAYKDILLEYFASGARWLSAPKPRLADEMYEPTAPAGQRLTDLEPVFDAANVLRFGTDLLYLVSDSGNELGAKWLQSALGSTYKVHPCRGLYASTHVDSTIVPLRPGLVLVNPARVNDDNMPDFLRSWQTVVCPELVDIGFTGDKPHCSVWIGMNLLVVRPDLAVVDRRQTGLIKVLEKHGVDVLPLQLTHSRTLGGGFHCATLDVRRTGSLETYRF.

Active-site residues include Asp-179 and His-227. The Amidino-cysteine intermediate role is filled by Cys-332.

It belongs to the amidinotransferase family. Homodimer.

It carries out the reaction 1-amino-1-deoxy-scyllo-inositol 4-phosphate + L-arginine = 1-guanidino-1-deoxy-scyllo-inositol 4-phosphate + L-ornithine. It participates in antibiotic biosynthesis; streptomycin biosynthesis. Its function is as follows. Catalyzes two non-consecutive transamidination reactions. It converts scyllo-inosamine 4-phosphate into N-amidino-scyllo-inosamine 4-phosphate and N1-amidinostreptamine 6-phosphate into streptidine 6-phosphate. The protein is Inosamine-phosphate amidinotransferase 1 (strB1) of Streptomyces glaucescens.